A 346-amino-acid polypeptide reads, in one-letter code: MALLKVKFDQKKRVKLAQGLWLMNWFSVLAGIIIFGLGLFLKIELRKRSDVMNNSESHFVPNSLIGVGVLSCVFNSLAGKICYDALDPAKYAKWKPWLKPYLAVCVLFNVVLFLVALCCFLLRGSLESTLAHGLKNGMKFYRDTDTPGRCFMKKTIDMLQIEFKCCGNNGFRDWFEIQWISNRYLDFSSKEVKDRIKSNVDGRYLVDGVPFSCCNPNSPRPCIQYQLTNNSAHYSYDHQTEELNLWLRGCRAALLSYYSNLMNTTGAVTLLVWLFEVTITVGLRYLHTALEGMANPEDPECESEGWLLEKSVPETWKAFLESVKKLGKGNQVEAEGEDAGQAPAAG.

The Cytoplasmic portion of the chain corresponds to 1–18 (MALLKVKFDQKKRVKLAQ). The helical transmembrane segment at 19-41 (GLWLMNWFSVLAGIIIFGLGLFL) threads the bilayer. Topologically, residues 42-62 (KIELRKRSDVMNNSESHFVPN) are lumenal. An N-linked (GlcNAc...) asparagine glycan is attached at N53. Residues 63 to 79 (SLIGVGVLSCVFNSLAG) traverse the membrane as a helical segment. Topologically, residues 80–101 (KICYDALDPAKYAKWKPWLKPY) are cytoplasmic. The chain crosses the membrane as a helical span at residues 102-122 (LAVCVLFNVVLFLVALCCFLL). The Lumenal segment spans residues 123-264 (RGSLESTLAH…LSYYSNLMNT (142 aa)). 2 N-linked (GlcNAc...) asparagine glycosylation sites follow: N229 and N263. A helical membrane pass occupies residues 265–283 (TGAVTLLVWLFEVTITVGL). Residues 284-346 (RYLHTALEGM…EDAGQAPAAG (63 aa)) are Cytoplasmic-facing. The tract at residues 341-346 (QAPAAG) is interaction with MREG.

It belongs to the PRPH2/ROM1 family. Homodimer; disulfide-linked. Forms a homotetramer. Forms a heterotetramer with ROM1. Homotetramer and heterotetramer core complexes go on to form higher order complexes by formation of intermolecular disulfide bonds. Interacts with MREG. Interacts with STX3. Interacts with SNAP25. As to expression, retina (photoreceptor). In rim region of ROS (rod outer segment) disks.

The protein localises to the membrane. The protein resides in the cell projection. It is found in the cilium. It localises to the photoreceptor outer segment. Its subcellular location is the photoreceptor inner segment. Its function is as follows. Essential for retina photoreceptor outer segment disk morphogenesis, may also play a role with ROM1 in the maintenance of outer segment disk structure. Required for the maintenance of retinal outer nuclear layer thickness. Required for the correct development and organization of the photoreceptor inner segment. In Bos taurus (Bovine), this protein is Peripherin-2 (PRPH2).